We begin with the raw amino-acid sequence, 119 residues long: Putative membrane protein insertion efficiency factor (119 aa).

It belongs to the UPF0161 family.

Its subcellular location is the cell inner membrane. Its function is as follows. Could be involved in insertion of integral membrane proteins into the membrane. This chain is Putative membrane protein insertion efficiency factor, found in Brucella anthropi (strain ATCC 49188 / DSM 6882 / CCUG 24695 / JCM 21032 / LMG 3331 / NBRC 15819 / NCTC 12168 / Alc 37) (Ochrobactrum anthropi).